Here is a 1162-residue protein sequence, read N- to C-terminus: Transcription termination factor 2 (1162 aa).

Residues Cys6, His9, Cys32, and Cys37 each coordinate Zn(2+). The GRF-type zinc-finger motif lies at 6-46 (CPEHGTFCFLKTGVRDGPNKGKSFYVCRADTCSFVRATDIP). Disordered regions lie at residues 97-116 (PDSK…ETFH), 142-358 (IKGE…EEDD), 388-407 (DRSV…KVEP), and 459-503 (LSPE…TQPV). Over residues 105–116 (SNKSQHASETFH) the composition is skewed to polar residues. Positions 142–178 (IKGEGEEKKADKKQREKGDQLFDQKKEQKPEMMEKDL) are enriched in basic and acidic residues. Lys143 is covalently cross-linked (Glycyl lysine isopeptide (Lys-Gly) (interchain with G-Cter in SUMO2)). Residues 219 to 232 (IKSQQCQGNELTRP) show a composition bias toward polar residues. Residues 233-245 (SASSQEKSSGKSQ) show a composition bias toward low complexity. Residues 246–258 (DVQRESEPLREKV) show a composition bias toward basic and acidic residues. Positions 261–274 (LLPQNVHSHNSISK) are enriched in polar residues. Residues 323 to 338 (PAPGGPAAQAAPAAPG) show a composition bias toward low complexity. A compositionally biased stretch (polar residues) spans 459–485 (LSPEQGTNEKSNSQVPQQSHFTKTTTG). At Ser460 the chain carries Phosphoserine. Positions 583–786 (WRESQKPQGG…YSLLKFLRCS (204 aa)) constitute a Helicase ATP-binding domain. An ATP-binding site is contributed by 596 to 603 (DDMGLGKT). Residues 737-740 (DEAH) carry the DEAH box motif. Residues 871 to 890 (KRHESRGNQSGRSPNNPFSR) are disordered. The segment covering 877-888 (GNQSGRSPNNPF) has biased composition (polar residues). A phosphoserine mark is found at Ser883 and Ser908. Positions 995–1157 (SLLAELEAIQ…VTKLTLADLR (163 aa)) constitute a Helicase C-terminal domain.

This sequence belongs to the SNF2/RAD54 helicase family. As to quaternary structure, interacts with CDC5L. Part of the spliceosome.

Its subcellular location is the cytoplasm. The protein resides in the nucleus. Its function is as follows. DsDNA-dependent ATPase which acts as a transcription termination factor by coupling ATP hydrolysis with removal of RNA polymerase II from the DNA template. May contribute to mitotic transcription repression. May also be involved in pre-mRNA splicing. The chain is Transcription termination factor 2 (TTF2) from Homo sapiens (Human).